The sequence spans 251 residues: tRNA pseudouridine synthase A (251 aa).

The active-site Nucleophile is the Asp-52. Substrate is bound at residue Tyr-113.

This sequence belongs to the tRNA pseudouridine synthase TruA family. Homodimer.

It carries out the reaction uridine(38/39/40) in tRNA = pseudouridine(38/39/40) in tRNA. In terms of biological role, formation of pseudouridine at positions 38, 39 and 40 in the anticodon stem and loop of transfer RNAs. This is tRNA pseudouridine synthase A from Brucella abortus (strain 2308).